Reading from the N-terminus, the 135-residue chain is Large ribosomal subunit protein bL21 (135 aa).

The segment covering 109–128 (TLATAQSAPPSTSEATTDTT) has biased composition (polar residues). The disordered stretch occupies residues 109 to 135 (TLATAQSAPPSTSEATTDTTGIPAAEE).

Belongs to the bacterial ribosomal protein bL21 family. In terms of assembly, part of the 50S ribosomal subunit. Contacts protein L20.

In terms of biological role, this protein binds to 23S rRNA in the presence of protein L20. The polypeptide is Large ribosomal subunit protein bL21 (Synechococcus sp. (strain JA-3-3Ab) (Cyanobacteria bacterium Yellowstone A-Prime)).